The sequence spans 363 residues: Cyanuric acid amidohydrolase (363 aa).

An RU A region spans residues 1 to 103 (MKTRVTRLTV…LVFEVDDSAP (103 aa)). Substrate contacts are provided by residues Arg51 and 82 to 83 (SG). The segment at 111 to 247 (GLAAGVAFTR…NEVLVLGNAP (137 aa)) is RU B. The active site involves Lys161. Substrate-binding positions include Arg193 and 230-231 (SA). The active-site Nucleophile is Ser230. Residues 253–363 (YRIGHAVMED…GGPLALIVRS (111 aa)) form an RU C region. Glu297 provides a ligand contact to Mg(2+). Substrate is bound by residues Arg324 and 343-344 (SG). 5 residues coordinate Mg(2+): Ala346, Gln349, Gly350, Pro351, and Gly354.

Belongs to the cyclic amide hydrolase (CyAH) family. In terms of assembly, homotetramer.

It carries out the reaction cyanurate + H2O = 1-carboxybiuret + H(+). It participates in xenobiotic degradation; atrazine degradation; biuret from cyanurate: step 1/1. Its activity is regulated as follows. Inhibited by barbituric acid. Responsible for the hydrolysis of cyanuric acid, an intermediate formed during catabolism of s-triazine based compounds in herbicides such as atrazine and polymers such as melamine. Catalyzes the hydrolytic opening of the s-triazine ring of cyanuric acid (2,4,6-trihydroxy-s-triazine) to yield carbon dioxide and carboxybiuret, which spontaneously decarboxylates to biuret. The polypeptide is Cyanuric acid amidohydrolase (Ectopseudomonas oleovorans (strain CECT 5344) (Pseudomonas pseudoalcaligenes)).